Consider the following 24-residue polypeptide: Cytochrome c oxidase subunit 5A-2, mitochondrial (24 aa).

The protein belongs to the cytochrome c oxidase subunit 5A family. Component of the cytochrome c oxidase (complex IV, CIV), a multisubunit enzyme composed of 14 subunits. The complex is composed of a catalytic core of 3 subunits MT-CO1, MT-CO2 and MT-CO3, encoded in the mitochondrial DNA, and 11 supernumerary subunits COX4I, COX5A, COX5B, COX6A, COX6B, COX6C, COX7A, COX7B, COX7C, COX8 and NDUFA4, which are encoded in the nuclear genome. The complex exists as a monomer or a dimer and forms supercomplexes (SCs) in the inner mitochondrial membrane with NADH-ubiquinone oxidoreductase (complex I, CI) and ubiquinol-cytochrome c oxidoreductase (cytochrome b-c1 complex, complex III, CIII), resulting in different assemblies (supercomplex SCI(1)III(2)IV(1) and megacomplex MCI(2)III(2)IV(2)).

The protein resides in the mitochondrion inner membrane. It functions in the pathway energy metabolism; oxidative phosphorylation. Its function is as follows. Component of the cytochrome c oxidase, the last enzyme in the mitochondrial electron transport chain which drives oxidative phosphorylation. The respiratory chain contains 3 multisubunit complexes succinate dehydrogenase (complex II, CII), ubiquinol-cytochrome c oxidoreductase (cytochrome b-c1 complex, complex III, CIII) and cytochrome c oxidase (complex IV, CIV), that cooperate to transfer electrons derived from NADH and succinate to molecular oxygen, creating an electrochemical gradient over the inner membrane that drives transmembrane transport and the ATP synthase. Cytochrome c oxidase is the component of the respiratory chain that catalyzes the reduction of oxygen to water. Electrons originating from reduced cytochrome c in the intermembrane space (IMS) are transferred via the dinuclear copper A center (CU(A)) of subunit 2 and heme A of subunit 1 to the active site in subunit 1, a binuclear center (BNC) formed by heme A3 and copper B (CU(B)). The BNC reduces molecular oxygen to 2 water molecules using 4 electrons from cytochrome c in the IMS and 4 protons from the mitochondrial matrix. This chain is Cytochrome c oxidase subunit 5A-2, mitochondrial, found in Thunnus obesus (Bigeye tuna).